A 339-amino-acid polypeptide reads, in one-letter code: Leucine-rich repeat-containing protein 75A (339 aa).

Residues 1–25 (MGTRQTKGSLAERASPGAAPGPRRE) form a disordered region. Over residues 11 to 21 (AERASPGAAPG) the composition is skewed to low complexity. LRR repeat units follow at residues 203 to 216 (VDSVELGFTGLTDD) and 228 to 241 (LPRLTTLALNGNRL). Residues 294 to 339 (LPTILELGEGPGTGEEAREGTDQQDPIGSPVTPARGQESTECVIQT) are disordered. Serine 322 is modified (phosphoserine). Threonine 325 is modified (phosphothreonine). Residues 330–339 (QESTECVIQT) show a composition bias toward polar residues.

This sequence belongs to the LRRC75 family.

This is Leucine-rich repeat-containing protein 75A (Lrrc75a) from Mus musculus (Mouse).